The following is a 527-amino-acid chain: Peptide chain release factor 3 (527 aa).

Positions 9–278 constitute a tr-type G domain; sequence DIRRTFAIIS…GLTQWAPKPQ (270 aa). GTP-binding positions include 18-25, 86-90, and 140-143; these read SHPDAGKT, DTPGH, and NKCD.

The protein belongs to the TRAFAC class translation factor GTPase superfamily. Classic translation factor GTPase family. PrfC subfamily.

Its subcellular location is the cytoplasm. In terms of biological role, increases the formation of ribosomal termination complexes and stimulates activities of RF-1 and RF-2. It binds guanine nucleotides and has strong preference for UGA stop codons. It may interact directly with the ribosome. The stimulation of RF-1 and RF-2 is significantly reduced by GTP and GDP, but not by GMP. In Shewanella denitrificans (strain OS217 / ATCC BAA-1090 / DSM 15013), this protein is Peptide chain release factor 3.